A 454-amino-acid chain; its full sequence is Bifunctional protein GlmU (454 aa).

The tract at residues 1–225 (MNIVILAAGM…IWETLGVNSK (225 aa)) is pyrophosphorylase. Residues 6–9 (LAAG), K20, Q71, 76–77 (GT), 98–100 (YGD), G135, E150, N165, and N223 each bind UDP-N-acetyl-alpha-D-glucosamine. Residue D100 coordinates Mg(2+). Residue N223 coordinates Mg(2+). The linker stretch occupies residues 226–246 (LQLAEVERIHQGNQARRLLEA). Residues 247 to 454 (GVTLLDPARI…WQRPVKQPKK (208 aa)) are N-acetyltransferase. The UDP-N-acetyl-alpha-D-glucosamine site is built by R329 and K347. The Proton acceptor role is filled by H359. The UDP-N-acetyl-alpha-D-glucosamine site is built by Y362 and N373. Acetyl-CoA contacts are provided by residues A376, 382-383 (NY), S401, A419, and R436.

This sequence in the N-terminal section; belongs to the N-acetylglucosamine-1-phosphate uridyltransferase family. The protein in the C-terminal section; belongs to the transferase hexapeptide repeat family. Homotrimer. Mg(2+) is required as a cofactor.

It localises to the cytoplasm. It carries out the reaction alpha-D-glucosamine 1-phosphate + acetyl-CoA = N-acetyl-alpha-D-glucosamine 1-phosphate + CoA + H(+). The catalysed reaction is N-acetyl-alpha-D-glucosamine 1-phosphate + UTP + H(+) = UDP-N-acetyl-alpha-D-glucosamine + diphosphate. The protein operates within nucleotide-sugar biosynthesis; UDP-N-acetyl-alpha-D-glucosamine biosynthesis; N-acetyl-alpha-D-glucosamine 1-phosphate from alpha-D-glucosamine 6-phosphate (route II): step 2/2. It participates in nucleotide-sugar biosynthesis; UDP-N-acetyl-alpha-D-glucosamine biosynthesis; UDP-N-acetyl-alpha-D-glucosamine from N-acetyl-alpha-D-glucosamine 1-phosphate: step 1/1. Its pathway is bacterial outer membrane biogenesis; LPS lipid A biosynthesis. In terms of biological role, catalyzes the last two sequential reactions in the de novo biosynthetic pathway for UDP-N-acetylglucosamine (UDP-GlcNAc). The C-terminal domain catalyzes the transfer of acetyl group from acetyl coenzyme A to glucosamine-1-phosphate (GlcN-1-P) to produce N-acetylglucosamine-1-phosphate (GlcNAc-1-P), which is converted into UDP-GlcNAc by the transfer of uridine 5-monophosphate (from uridine 5-triphosphate), a reaction catalyzed by the N-terminal domain. The sequence is that of Bifunctional protein GlmU from Cupriavidus necator (strain ATCC 17699 / DSM 428 / KCTC 22496 / NCIMB 10442 / H16 / Stanier 337) (Ralstonia eutropha).